The primary structure comprises 106 residues: Iron-sulfur cluster assembly protein CyaY (106 aa).

This sequence belongs to the frataxin family.

Its function is as follows. Involved in iron-sulfur (Fe-S) cluster assembly. May act as a regulator of Fe-S biogenesis. The chain is Iron-sulfur cluster assembly protein CyaY from Pectobacterium carotovorum subsp. carotovorum (strain PC1).